The sequence spans 286 residues: Tungstate-binding protein TupA (286 aa).

The first 20 residues, 1–20 (MKRLLSIITAVMMLALALTG), serve as a signal peptide directing secretion. The N-palmitoyl cysteine moiety is linked to residue Cys21. A lipid anchor (S-diacylglycerol cysteine) is attached at Cys21.

As to quaternary structure, monomer. The complex is composed of two ATP-binding proteins (TupC), two transmembrane proteins (TupB) and a solute-binding protein (TupA).

The protein localises to the cell membrane. Part of an ABC transporter complex involved in tungstate uptake. Specifically binds tungstate. The sequence is that of Tungstate-binding protein TupA from Peptoclostridium acidaminophilum (Eubacterium acidaminophilum).